Reading from the N-terminus, the 1880-residue chain is Nonribosomal peptide synthetase otaB (1880 aa).

An adenylation 1 region spans residues 205–594 (AQAVERGNSI…SVSFVGRRQA (390 aa)). The region spanning 728-804 (LPLSPLERQI…ELGAHLEQEA (77 aa)) is the Carrier domain. O-(pantetheine 4'-phosphoryl)serine is present on S765. The tract at residues 840–1250 (EDVYPCTALQ…LLSPQDQQQL (411 aa)) is condensation. The tract at residues 1269 to 1665 (QRQCLAHPQK…GRKDRQVKLR (397 aa)) is adenylation 2.

The protein belongs to the NRP synthetase family.

It carries out the reaction 7-carboxymellein + L-phenylalanine + ATP = ochratoxin B + ADP + phosphate + H(+). Its pathway is mycotoxin biosynthesis. In terms of biological role, nonribosomal peptide synthetase; part of the gene cluster that mediates the biosynthesis of ochratoxin A (OTA), a mycotoxin composed of a chlorinated type I polyketide dihydroisocoumarin moiety linked to L-phenylalanine, and demonstrated to have nephrotoxic, immunotoxic, genotoxic, neurotoxic, and teratogenic properties. OtaB is responsible for the linking of phenylalanine to the dihydroisocoumarin ring. The pathway begins with the highly reducing polyketide synthase otaA that catalyzes the formation of the isocoumarin group during the initial stages of biosynthesis, starting from one acetate and 4 malonate units, to originate the characteristic pentaketide skeleton 7-methylmellein (7-MM) of the OTA molecule. The newly identified cyclase otaY might be involved in the polyketide cyclization reaction during the initial steps of the OTA biosynthesis. 7-MM is then oxidized into 7-carboxymellein (also called ochratoxin beta) by the cytochrome P450 monooxygenase otaC. The NRPS encoded by the otaB gene is involved in the linking of phenylalanine to the dihydroisocoumarin ring. The reaction catalyzed by NRPS results in the production of ochratoxin B (OTB), which is the non-chlorinated analog of OTA and which subsequently serves as the substrate of the halogenase otaD for chlorination activity to form the final molecular structure of OTA, containing a chlorine atom in the C-5 position of the molecule. The polypeptide is Nonribosomal peptide synthetase otaB (Aspergillus niger (strain ATCC MYA-4892 / CBS 513.88 / FGSC A1513)).